Reading from the N-terminus, the 303-residue chain is ATP-dependent Clp protease ATP-binding subunit CLPT3, chloroplastic (303 aa).

The N-terminal 37 residues, 1-37, are a transit peptide targeting the chloroplast; sequence MLLANAPHNGCSRLQQVTLLRASGAKLHRKRALTVVA. Disordered regions lie at residues 185-214 and 278-303; these read ASTE…RDSD and RDDN…DEYE.

The protein belongs to the ClpA/ClpB family.

The protein localises to the plastid. Its subcellular location is the chloroplast. Functionally, accessory protein regulating the assembly of the plastid Clp protease system. This Chlamydomonas reinhardtii (Chlamydomonas smithii) protein is ATP-dependent Clp protease ATP-binding subunit CLPT3, chloroplastic.